The following is a 260-amino-acid chain: Ubiquinone/menaquinone biosynthesis C-methyltransferase UbiE (260 aa).

S-adenosyl-L-methionine is bound by residues Thr83, Asp104, and 132-133 (NA).

Belongs to the class I-like SAM-binding methyltransferase superfamily. MenG/UbiE family.

The enzyme catalyses a 2-demethylmenaquinol + S-adenosyl-L-methionine = a menaquinol + S-adenosyl-L-homocysteine + H(+). The catalysed reaction is a 2-methoxy-6-(all-trans-polyprenyl)benzene-1,4-diol + S-adenosyl-L-methionine = a 5-methoxy-2-methyl-3-(all-trans-polyprenyl)benzene-1,4-diol + S-adenosyl-L-homocysteine + H(+). It participates in quinol/quinone metabolism; menaquinone biosynthesis; menaquinol from 1,4-dihydroxy-2-naphthoate: step 2/2. The protein operates within cofactor biosynthesis; ubiquinone biosynthesis. In terms of biological role, methyltransferase required for the conversion of demethylmenaquinol (DMKH2) to menaquinol (MKH2) and the conversion of 2-polyprenyl-6-methoxy-1,4-benzoquinol (DDMQH2) to 2-polyprenyl-3-methyl-6-methoxy-1,4-benzoquinol (DMQH2). This is Ubiquinone/menaquinone biosynthesis C-methyltransferase UbiE from Bartonella tribocorum (strain CIP 105476 / IBS 506).